Here is a 129-residue protein sequence, read N- to C-terminus: NADPH-dependent 7-cyano-7-deazaguanine reductase (129 aa).

Cys43 serves as the catalytic Thioimide intermediate. The active-site Proton donor is the Asp50. Substrate contacts are provided by residues 65-67 and 84-85; these read VEL and HE.

It belongs to the GTP cyclohydrolase I family. QueF type 1 subfamily.

The protein resides in the cytoplasm. It carries out the reaction 7-aminomethyl-7-carbaguanine + 2 NADP(+) = 7-cyano-7-deazaguanine + 2 NADPH + 3 H(+). The protein operates within tRNA modification; tRNA-queuosine biosynthesis. In terms of biological role, catalyzes the NADPH-dependent reduction of 7-cyano-7-deazaguanine (preQ0) to 7-aminomethyl-7-deazaguanine (preQ1). This is NADPH-dependent 7-cyano-7-deazaguanine reductase from Aquifex aeolicus (strain VF5).